The following is a 218-amino-acid chain: MTAPLTLALSKGRIFEETVPLLAAAGVTVAEDPERSRKLILPTTDPNLRVIVVRATDVPTYVEYGAADFGVAGKDVLLEHGGGGLYQPIDLNIARCRMSVAVPAGFDYANAVRQGARLRVATKYVETAREHFAAKGVHVDLIKLYGSMELAPLVGLADAIVDLVSSGGTLKANNLVEVEEIMPISSRLVVNQAALKLKRAALKPFLDAFERASQGGGA.

The protein belongs to the ATP phosphoribosyltransferase family. Short subfamily. As to quaternary structure, heteromultimer composed of HisG and HisZ subunits.

Its subcellular location is the cytoplasm. The catalysed reaction is 1-(5-phospho-beta-D-ribosyl)-ATP + diphosphate = 5-phospho-alpha-D-ribose 1-diphosphate + ATP. The protein operates within amino-acid biosynthesis; L-histidine biosynthesis; L-histidine from 5-phospho-alpha-D-ribose 1-diphosphate: step 1/9. Functionally, catalyzes the condensation of ATP and 5-phosphoribose 1-diphosphate to form N'-(5'-phosphoribosyl)-ATP (PR-ATP). Has a crucial role in the pathway because the rate of histidine biosynthesis seems to be controlled primarily by regulation of HisG enzymatic activity. This is ATP phosphoribosyltransferase from Burkholderia thailandensis (strain ATCC 700388 / DSM 13276 / CCUG 48851 / CIP 106301 / E264).